A 156-amino-acid polypeptide reads, in one-letter code: Ribosomal RNA large subunit methyltransferase H (156 aa).

Residues leucine 73, glycine 104, and 123–128 (LSSLTL) contribute to the S-adenosyl-L-methionine site.

Belongs to the RNA methyltransferase RlmH family. In terms of assembly, homodimer.

The protein resides in the cytoplasm. It carries out the reaction pseudouridine(1915) in 23S rRNA + S-adenosyl-L-methionine = N(3)-methylpseudouridine(1915) in 23S rRNA + S-adenosyl-L-homocysteine + H(+). Functionally, specifically methylates the pseudouridine at position 1915 (m3Psi1915) in 23S rRNA. The chain is Ribosomal RNA large subunit methyltransferase H from Ralstonia pickettii (strain 12J).